A 60-amino-acid polypeptide reads, in one-letter code: Large ribosomal subunit protein uL30 (60 aa).

It belongs to the universal ribosomal protein uL30 family. Part of the 50S ribosomal subunit.

This Bacillus pumilus (strain SAFR-032) protein is Large ribosomal subunit protein uL30.